A 414-amino-acid polypeptide reads, in one-letter code: 4-hydroxy-3-methylbut-2-en-1-yl diphosphate synthase (flavodoxin) (414 aa).

The [4Fe-4S] cluster site is built by cysteine 304, cysteine 307, cysteine 350, and glutamate 357.

Belongs to the IspG family. Requires [4Fe-4S] cluster as cofactor.

The catalysed reaction is (2E)-4-hydroxy-3-methylbut-2-enyl diphosphate + oxidized [flavodoxin] + H2O + 2 H(+) = 2-C-methyl-D-erythritol 2,4-cyclic diphosphate + reduced [flavodoxin]. It functions in the pathway isoprenoid biosynthesis; isopentenyl diphosphate biosynthesis via DXP pathway; isopentenyl diphosphate from 1-deoxy-D-xylulose 5-phosphate: step 5/6. Converts 2C-methyl-D-erythritol 2,4-cyclodiphosphate (ME-2,4cPP) into 1-hydroxy-2-methyl-2-(E)-butenyl 4-diphosphate. The polypeptide is 4-hydroxy-3-methylbut-2-en-1-yl diphosphate synthase (flavodoxin) (Aromatoleum aromaticum (strain DSM 19018 / LMG 30748 / EbN1) (Azoarcus sp. (strain EbN1))).